A 92-amino-acid chain; its full sequence is Small ribosomal subunit protein uS19 (92 aa).

This sequence belongs to the universal ribosomal protein uS19 family.

In terms of biological role, protein S19 forms a complex with S13 that binds strongly to the 16S ribosomal RNA. The chain is Small ribosomal subunit protein uS19 from Mycoplasmopsis synoviae (strain 53) (Mycoplasma synoviae).